The primary structure comprises 91 residues: Probable Fe(2+)-trafficking protein (91 aa).

Belongs to the Fe(2+)-trafficking protein family. As to quaternary structure, monomer.

Its function is as follows. Could be a mediator in iron transactions between iron acquisition and iron-requiring processes, such as synthesis and/or repair of Fe-S clusters in biosynthetic enzymes. This Klebsiella pneumoniae subsp. pneumoniae (strain ATCC 700721 / MGH 78578) protein is Probable Fe(2+)-trafficking protein.